We begin with the raw amino-acid sequence, 274 residues long: Orotidine 5'-phosphate decarboxylase (274 aa).

The segment covering 1–15 (MSAGRRSSGGRSAAA) has biased composition (low complexity). Residues 1–21 (MSAGRRSSGGRSAAAPRFTPP) form a disordered region. Residues Asp-32, Lys-54, 99 to 108 (DLKLHDIPAT), Thr-154, Arg-215, Gln-224, Gly-244, and Arg-245 contribute to the substrate site. The Proton donor role is filled by Lys-101.

It belongs to the OMP decarboxylase family. Type 1 subfamily. Homodimer.

The enzyme catalyses orotidine 5'-phosphate + H(+) = UMP + CO2. Its pathway is pyrimidine metabolism; UMP biosynthesis via de novo pathway; UMP from orotate: step 2/2. Catalyzes the decarboxylation of orotidine 5'-monophosphate (OMP) to uridine 5'-monophosphate (UMP). The protein is Orotidine 5'-phosphate decarboxylase of Frankia casuarinae (strain DSM 45818 / CECT 9043 / HFP020203 / CcI3).